Reading from the N-terminus, the 1594-residue chain is Protein SHORTAGE IN CHIASMATA 1 (1594 aa).

Disordered stretches follow at residues 1148 to 1180 (DSRS…SKKK), 1239 to 1283 (APFK…QPDF), 1396 to 1426 (AADI…YADN), 1491 to 1523 (RSRA…NTKR), and 1536 to 1594 (GGNK…LVWK). A compositionally biased stretch (low complexity) spans 1151-1165 (SVMTDSSSSVSSGPD). Basic and acidic residues-rich tracts occupy residues 1254 to 1265 (PSKDPERFDKKS) and 1402 to 1414 (SSER…DSKY). Polar residues predominate over residues 1577–1594 (QSLSYTANGTGQTKLVWK).

Belongs to the XPF family. Interacts with PTD. In terms of tissue distribution, highest levels in young buds, where male meiosis occurs. Also present at low levels in plantlets, leaves, flowers, and roots.

Its subcellular location is the nucleus. Essential for the formation of class I meiotic crossovers. In Arabidopsis thaliana (Mouse-ear cress), this protein is Protein SHORTAGE IN CHIASMATA 1.